Consider the following 131-residue polypeptide: Small ribosomal subunit protein uS8 (131 aa).

This sequence belongs to the universal ribosomal protein uS8 family. In terms of assembly, part of the 30S ribosomal subunit. Contacts proteins S5 and S12.

Its function is as follows. One of the primary rRNA binding proteins, it binds directly to 16S rRNA central domain where it helps coordinate assembly of the platform of the 30S subunit. The sequence is that of Small ribosomal subunit protein uS8 from Acinetobacter baumannii (strain AB307-0294).